The primary structure comprises 103 residues: Large ribosomal subunit protein bL21 (103 aa).

Belongs to the bacterial ribosomal protein bL21 family. Part of the 50S ribosomal subunit. Contacts protein L20.

Functionally, this protein binds to 23S rRNA in the presence of protein L20. The protein is Large ribosomal subunit protein bL21 of Mycobacterium tuberculosis (strain ATCC 25618 / H37Rv).